The chain runs to 605 residues: MNIEQLKERQKCIRNFSIIAHIDHGKSTLADRILEFTGTIDKRIMKEQILDSMDLERERGITIKLNAVEINYQSKDGKNYIMHLIDTPGHVDFSYEVSRSLAACEGALLIIDASQGIQAQTLANVYLAVENNLTLIPVLNKVDLPSADVPKVKEEIKETLGLDPEKALIASGKTGLGVIDILEQIVTRISPPQGDIQKPLQALIFDSYFDSYKGVVPSIRIVNGTVKKGDQIRFMASNSVYEVVEVGVYNPKQIVKDFLAPGDVGYITAAIKSINHVRVGDTITSQTNQALLPLLGYKQMNSVVFCGLYPVETNKYDILKEALEKLKLNDSSLIFEPESSNALGLGFRTGFLGLLHMEIIQERISREFGVEVIATAPSVIYHVYSTKGEKFLVDNPSKLPSTQMIDRIEEPFIKATIMCPEIYIGKVMKLSQNKRGALQNIEYIDSQRVMINYLLPFSEIIYSYFDKLKSLTKGYASFDYEIDKYRVSKLQKMDILLNGEIVDALSLIVHHDFAYERGKAICETLKEFIPKQMFEIPIQAALGKKIIARQTIKAMRKDVTAKLYGGDVTRKKKLLEKQKKGKKKMKTLGKVQLPQKAFLAILATK.

In terms of domain architecture, tr-type G spans 11–193 (KCIRNFSIIA…QIVTRISPPQ (183 aa)). Residues 23–28 (DHGKST) and 140–143 (NKVD) each bind GTP.

This sequence belongs to the TRAFAC class translation factor GTPase superfamily. Classic translation factor GTPase family. LepA subfamily.

It localises to the cell membrane. It carries out the reaction GTP + H2O = GDP + phosphate + H(+). Required for accurate and efficient protein synthesis under certain stress conditions. May act as a fidelity factor of the translation reaction, by catalyzing a one-codon backward translocation of tRNAs on improperly translocated ribosomes. Back-translocation proceeds from a post-translocation (POST) complex to a pre-translocation (PRE) complex, thus giving elongation factor G a second chance to translocate the tRNAs correctly. Binds to ribosomes in a GTP-dependent manner. The chain is Elongation factor 4 from Aster yellows witches'-broom phytoplasma (strain AYWB).